A 115-amino-acid chain; its full sequence is NADH-ubiquinone oxidoreductase chain 3 (115 aa).

Transmembrane regions (helical) follow at residues 5–25 (LTFM…FWLP), 55–75 (FFLV…LLPL), and 86–106 (LMLT…AYEW).

It belongs to the complex I subunit 3 family. Core subunit of respiratory chain NADH dehydrogenase (Complex I) which is composed of 45 different subunits. Interacts with TMEM186. Interacts with TMEM242.

The protein localises to the mitochondrion inner membrane. The enzyme catalyses a ubiquinone + NADH + 5 H(+)(in) = a ubiquinol + NAD(+) + 4 H(+)(out). In terms of biological role, core subunit of the mitochondrial membrane respiratory chain NADH dehydrogenase (Complex I) which catalyzes electron transfer from NADH through the respiratory chain, using ubiquinone as an electron acceptor. Essential for the catalytic activity of complex I. The protein is NADH-ubiquinone oxidoreductase chain 3 of Avahi unicolor (Sambirano woolly lemur).